The primary structure comprises 104 residues: uncharacterized protein (104 aa).

The stretch at 24-69 forms a coiled coil; it reads VIKQIIEKYNDKVKELDTLKNQYQNLQQDYENLKQQVSLQRQTMIS.

This is an uncharacterized protein from Acanthamoeba polyphaga mimivirus (APMV).